The chain runs to 321 residues: Peroxidase 5 (321 aa).

The N-terminal stretch at 1–24 (MERFSLRFVLMMVSIILTSSICQA) is a signal peptide. Gln-25 is subject to Pyrrolidone carboxylic acid. 4 cysteine pairs are disulfide-bonded: Cys-35–Cys-115, Cys-68–Cys-73, Cys-121–Cys-317, and Cys-201–Cys-227. Catalysis depends on His-66, which acts as the Proton acceptor. The Ca(2+) site is built by Asp-67, Val-70, Gly-72, Asp-74, and Ser-76. Pro-164 contributes to the substrate binding site. His-194 is a heme b binding site. A Ca(2+)-binding site is contributed by Thr-195. Asn-211 carries N-linked (GlcNAc...) asparagine glycosylation. Residues Asp-240, Thr-243, and Asp-248 each coordinate Ca(2+). N-linked (GlcNAc...) asparagine glycosylation occurs at Asn-285.

Belongs to the peroxidase family. Classical plant (class III) peroxidase subfamily. It depends on heme b as a cofactor. The cofactor is Ca(2+).

The protein localises to the secreted. It catalyses the reaction 2 a phenolic donor + H2O2 = 2 a phenolic radical donor + 2 H2O. Functionally, removal of H(2)O(2), oxidation of toxic reductants, biosynthesis and degradation of lignin, suberization, auxin catabolism, response to environmental stresses such as wounding, pathogen attack and oxidative stress. These functions might be dependent on each isozyme/isoform in each plant tissue. In Arabidopsis thaliana (Mouse-ear cress), this protein is Peroxidase 5 (PER5).